Here is a 339-residue protein sequence, read N- to C-terminus: Cathepsin L (339 aa).

Residues 1–17 (MRTVLVALLALVALTQA) form the signal peptide. Positions 18–121 (ISPLDLIKEE…ATYIPPAHVT (104 aa)) are cleaved as a propeptide — activation peptide. Asparagine 96 carries N-linked (GlcNAc...) asparagine glycosylation. Cystine bridges form between cysteine 143-cysteine 186, cysteine 177-cysteine 219, and cysteine 278-cysteine 328. The active site involves cysteine 146. The active site involves histidine 285. The propeptide occupies 295–298 (DESG). Asparagine 306 is an active-site residue.

Belongs to the peptidase C1 family. In terms of assembly, dimer of a heavy and a light chain linked by disulfide bonds.

Its subcellular location is the lysosome. It catalyses the reaction Specificity close to that of papain. As compared to cathepsin B, cathepsin L exhibits higher activity toward protein substrates, but has little activity on Z-Arg-Arg-NHMec, and no peptidyl-dipeptidase activity.. Functionally, important for the overall degradation of proteins in lysosomes. Required for differentiation of imaginal disks. This Sarcophaga peregrina (Flesh fly) protein is Cathepsin L.